Consider the following 358-residue polypeptide: Phenylalanine--tRNA ligase alpha subunit (358 aa).

Residue Glu-258 coordinates Mg(2+).

The protein belongs to the class-II aminoacyl-tRNA synthetase family. Phe-tRNA synthetase alpha subunit type 1 subfamily. Tetramer of two alpha and two beta subunits. The cofactor is Mg(2+).

Its subcellular location is the cytoplasm. The enzyme catalyses tRNA(Phe) + L-phenylalanine + ATP = L-phenylalanyl-tRNA(Phe) + AMP + diphosphate + H(+). This Rhodospirillum centenum (strain ATCC 51521 / SW) protein is Phenylalanine--tRNA ligase alpha subunit.